The following is a 1939-amino-acid chain: Myosin-1 (1939 aa).

Positions 33–82 (DAKTSVFVAEPKESFVKGTVQSREGGKVTVKTEAGATLTVKEDQVFPMNP) constitute a Myosin N-terminal SH3-like domain. A phosphothreonine mark is found at threonine 64 and threonine 69. Residues 86–782 (DKIEDMAMMT…LLGLLEEMRD (697 aa)) form the Myosin motor domain. At lysine 130 the chain carries N6,N6,N6-trimethyllysine. Residue 179-186 (GESGAGKT) participates in ATP binding. Tyrosine 389 bears the Phosphotyrosine mark. Phosphothreonine is present on threonine 419. Tyrosine 424 is subject to Phosphotyrosine. The actin-binding stretch occupies residues 659 to 681 (LNKLMTNLRSTHPHFVRCIIPNE). Histidine 757 bears the Pros-methylhistidine mark. Residues 761-775 (KFGHTKVFFKAGLLG) are actin-binding. One can recognise an IQ domain in the interval 785-814 (LAQLITRTQARCRGFLARVEYQKMVERRES). Residues 843–1939 (LLKSAETEKE…EVHTKIISEE (1097 aa)) adopt a coiled-coil conformation. Phosphoserine is present on residues serine 1092 and serine 1096. 2 disordered regions span residues 1125 to 1147 (EIEA…SREL) and 1153 to 1172 (RLEE…KKRE). Residues 1128-1147 (AERASRAKAEKQRSDLSREL) are compositionally biased toward basic and acidic residues. Phosphoserine is present on residues serine 1162 and serine 1237. A Phosphothreonine modification is found at threonine 1241. Residue serine 1243 is modified to Phosphoserine. Threonine 1255 is modified (phosphothreonine). A Phosphoserine modification is found at serine 1261. Phosphothreonine is present on residues threonine 1265 and threonine 1286. 4 positions are modified to phosphoserine: serine 1288, serine 1292, serine 1303, and serine 1306. Residue tyrosine 1464 is modified to Phosphotyrosine. At threonine 1467 the chain carries Phosphothreonine. Serine 1474 is subject to Phosphoserine. Tyrosine 1492 carries the phosphotyrosine modification. At serine 1495 the chain carries Phosphoserine. Threonine 1501 bears the Phosphothreonine mark. Position 1514 is a phosphoserine (serine 1514). A Phosphothreonine modification is found at threonine 1517. Residues serine 1542, serine 1554, serine 1574, serine 1600, serine 1603, serine 1714, and serine 1726 each carry the phosphoserine modification. Phosphothreonine is present on residues threonine 1730 and threonine 1736. Serine 1739 is subject to Phosphoserine.

This sequence belongs to the TRAFAC class myosin-kinesin ATPase superfamily. Myosin family. As to quaternary structure, muscle myosin is a hexameric protein that consists of 2 heavy chain subunits (MHC), 2 alkali light chain subunits (MLC) and 2 regulatory light chain subunits (MLC-2). Interacts with SLC26A5.

The protein resides in the cytoplasm. It is found in the myofibril. Its function is as follows. Required for normal hearing. It plays a role in cochlear amplification of auditory stimuli, likely through the positive regulation of prestin (SLC26A5) activity and outer hair cell (OHC) electromotility. The chain is Myosin-1 (MYH1) from Sus scrofa (Pig).